A 238-amino-acid polypeptide reads, in one-letter code: Ribonuclease PH (238 aa).

Residues Arg-86 and 124-126 (GTR) contribute to the phosphate site.

The protein belongs to the RNase PH family. Homohexameric ring arranged as a trimer of dimers.

The catalysed reaction is tRNA(n+1) + phosphate = tRNA(n) + a ribonucleoside 5'-diphosphate. Its function is as follows. Phosphorolytic 3'-5' exoribonuclease that plays an important role in tRNA 3'-end maturation. Removes nucleotide residues following the 3'-CCA terminus of tRNAs; can also add nucleotides to the ends of RNA molecules by using nucleoside diphosphates as substrates, but this may not be physiologically important. Probably plays a role in initiation of 16S rRNA degradation (leading to ribosome degradation) during starvation. The polypeptide is Ribonuclease PH (Vibrio parahaemolyticus serotype O3:K6 (strain RIMD 2210633)).